A 310-amino-acid chain; its full sequence is Succinate dehydrogenase assembly factor 2, mitochondrial (310 aa).

Over residues 35–48 the composition is skewed to basic and acidic residues; that stretch reads LKDGSDEASPEVKA. The segment at 35 to 67 is disordered; sequence LKDGSDEASPEVKAHRANQANKAPNQFVPNTTS. The span at 52–67 shows a compositional bias: polar residues; sequence NQANKAPNQFVPNTTS.

Belongs to the SDHAF2 family. Interacts with the flavoprotein subunit within the SDH catalytic dimer.

It is found in the mitochondrion matrix. Its function is as follows. Plays an essential role in the assembly of succinate dehydrogenase (SDH), an enzyme complex (also referred to as respiratory complex II) that is a component of both the tricarboxylic acid (TCA) cycle and the mitochondrial electron transport chain, and which couples the oxidation of succinate to fumarate with the reduction of ubiquinone (coenzyme Q) to ubiquinol. Required for flavinylation (covalent attachment of FAD) of the flavoprotein subunit of the SDH catalytic dimer. The polypeptide is Succinate dehydrogenase assembly factor 2, mitochondrial (Penicillium rubens (strain ATCC 28089 / DSM 1075 / NRRL 1951 / Wisconsin 54-1255) (Penicillium chrysogenum)).